The primary structure comprises 70 residues: uncharacterized protein (70 aa).

Residues 50-70 (INVVLVLIIALIIFILMLDGV) traverse the membrane as a helical segment.

It is found in the membrane. This is an uncharacterized protein from Dictyostelium discoideum (Social amoeba).